A 566-amino-acid chain; its full sequence is Urease subunit alpha (566 aa).

One can recognise a Urease domain in the interval 128–566 (GGVDTHIHFI…LPMAQRYFLF (439 aa)). The Ni(2+) site is built by histidine 133, histidine 135, and lysine 216. Lysine 216 is subject to N6-carboxylysine. Histidine 218 lines the substrate pocket. Residues histidine 245 and histidine 271 each contribute to the Ni(2+) site. The active-site Proton donor is histidine 319. Residue aspartate 359 coordinates Ni(2+).

Belongs to the metallo-dependent hydrolases superfamily. Urease alpha subunit family. As to quaternary structure, may form a heterohexamer of 3 UreC (alpha) and 3 UreAB (gamma/beta) subunits. May also form a heterotrimer of UreA (gamma), UreB (beta) and UreC (alpha) subunits. Three heterotrimers associate to form the active enzyme. It depends on Ni cation as a cofactor. Post-translationally, carboxylation allows a single lysine to coordinate two nickel ions.

The protein localises to the cytoplasm. The enzyme catalyses urea + 2 H2O + H(+) = hydrogencarbonate + 2 NH4(+). The protein operates within nitrogen metabolism; urea degradation; CO(2) and NH(3) from urea (urease route): step 1/1. This is Urease subunit alpha from Pseudomonas syringae pv. tomato (strain ATCC BAA-871 / DC3000).